The chain runs to 299 residues: 4-hydroxy-tetrahydrodipicolinate synthase (299 aa).

Position 44 (threonine 44) interacts with pyruvate. Tyrosine 133 functions as the Proton donor/acceptor in the catalytic mechanism. The active-site Schiff-base intermediate with substrate is the lysine 162. Isoleucine 204 provides a ligand contact to pyruvate.

The protein belongs to the DapA family. Homotetramer; dimer of dimers.

Its subcellular location is the cytoplasm. The enzyme catalyses L-aspartate 4-semialdehyde + pyruvate = (2S,4S)-4-hydroxy-2,3,4,5-tetrahydrodipicolinate + H2O + H(+). Its pathway is amino-acid biosynthesis; L-lysine biosynthesis via DAP pathway; (S)-tetrahydrodipicolinate from L-aspartate: step 3/4. Functionally, catalyzes the condensation of (S)-aspartate-beta-semialdehyde [(S)-ASA] and pyruvate to 4-hydroxy-tetrahydrodipicolinate (HTPA). The sequence is that of 4-hydroxy-tetrahydrodipicolinate synthase from Thermus thermophilus (strain ATCC 27634 / DSM 579 / HB8).